Reading from the N-terminus, the 631-residue chain is Probable ATP-dependent RNA helicase DDX53 (631 aa).

The region spanning 48-109 (EPPLCFKIKN…EMKAKAKAAI (62 aa)) is the KH domain. The short motif at 222 to 250 (RFKDAFQQYPDLLKSIIRVGIVKPTPIQS) is the Q motif element. Residues Lys-244, Gln-249, 268-273 (TGTGKT), and His-311 each bind ATP. The Helicase ATP-binding domain maps to 253–428 (WPIILQGIDL…LSYLKDPMIV (176 aa)). The DEAD box signature appears at 376-379 (DEAD). The Helicase C-terminal domain maps to 440–601 (TVKQNIIVTT…SVPEDLVVMA (162 aa)).

Belongs to the DEAD box helicase family. As to expression, expressed in testis. Wide expression in various cancer tissues and cancer cell lines.

It localises to the nucleus. The catalysed reaction is ATP + H2O = ADP + phosphate + H(+). This Homo sapiens (Human) protein is Probable ATP-dependent RNA helicase DDX53 (DDX53).